Consider the following 203-residue polypeptide: Pyridoxine/pyridoxamine 5'-phosphate oxidase (203 aa).

Residues R51–K56, Y66–T67, R72, K73, and Q95 each bind FMN. K56 contacts substrate. Positions 113, 117, and 121 each coordinate substrate. FMN is bound by residues Q130–S131 and W175. R181–H183 is a binding site for substrate. R185 contacts FMN.

The protein belongs to the pyridoxamine 5'-phosphate oxidase family. In terms of assembly, homodimer. Requires FMN as cofactor.

It catalyses the reaction pyridoxamine 5'-phosphate + O2 + H2O = pyridoxal 5'-phosphate + H2O2 + NH4(+). The enzyme catalyses pyridoxine 5'-phosphate + O2 = pyridoxal 5'-phosphate + H2O2. The protein operates within cofactor metabolism; pyridoxal 5'-phosphate salvage; pyridoxal 5'-phosphate from pyridoxamine 5'-phosphate: step 1/1. It participates in cofactor metabolism; pyridoxal 5'-phosphate salvage; pyridoxal 5'-phosphate from pyridoxine 5'-phosphate: step 1/1. Catalyzes the oxidation of either pyridoxine 5'-phosphate (PNP) or pyridoxamine 5'-phosphate (PMP) into pyridoxal 5'-phosphate (PLP). In Novosphingobium aromaticivorans (strain ATCC 700278 / DSM 12444 / CCUG 56034 / CIP 105152 / NBRC 16084 / F199), this protein is Pyridoxine/pyridoxamine 5'-phosphate oxidase.